Reading from the N-terminus, the 86-residue chain is MTEVETIIKTVLKTGGYRLGSKSTLKSLRNGEAKAVIVASNCPEEVLEKIKSYDVKILVYNGTNMELGALCGKPFSVAAMAITEEI.

It belongs to the eukaryotic ribosomal protein eL30 family.

The sequence is that of Large ribosomal subunit protein eL30 (rpl30e) from Archaeoglobus fulgidus (strain ATCC 49558 / DSM 4304 / JCM 9628 / NBRC 100126 / VC-16).